The following is a 56-amino-acid chain: Putative 2-Cys peroxiredoxin BAS1 (56 aa).

It belongs to the peroxiredoxin family. AhpC/Prx1 subfamily. Homodimer; disulfide-linked, upon oxidation.

The protein resides in the plastid. Its subcellular location is the chloroplast. It carries out the reaction a hydroperoxide + [thioredoxin]-dithiol = an alcohol + [thioredoxin]-disulfide + H2O. Functionally, thiol-specific peroxidase that catalyzes the reduction of hydrogen peroxide and organic hydroperoxides to water and alcohols, respectively. Plays a role in cell protection against oxidative stress by detoxifying peroxides. May be an antioxidant enzyme particularly in the developing shoot and photosynthesizing leaf. This is Putative 2-Cys peroxiredoxin BAS1 from Pinus strobus (Eastern white pine).